Consider the following 89-residue polypeptide: Putative regulatory protein CLH_1161 (89 aa).

Belongs to the RemA family.

The sequence is that of Putative regulatory protein CLH_1161 from Clostridium botulinum (strain Alaska E43 / Type E3).